A 325-amino-acid polypeptide reads, in one-letter code: MEKNTSQTIFSNFFLLLLLSSCVSAQLRTGFYQNSCPNVETIVRNAVRQKFQQTFVTAPATLRLFFHDCFVRGCDASIMIASPSERDHPDDMSLAGDGFDTVVKAKQAVDSNPNCRNKVSCADILALATREVVVLTGGPSYPVELGRRDGRISTKASVQSQLPQPEFNLNQLNGMFSRHGLSQTDMIALSGAHTIGFAHCGKMSKRIYNFSPTTRIDPSINRGYVVQLKQMCPIGVDVRIAINMDPTSPRTFDNAYFKNLQQGKGLFTSDQILFTDQRSRSTVNSFANSEGAFRQAFITAITKLGRVGVLTGNAGEIRRDCSRVN.

The N-terminal stretch at 1 to 25 (MEKNTSQTIFSNFFLLLLLSSCVSA) is a signal peptide. Cystine bridges form between cysteine 36–cysteine 115, cysteine 69–cysteine 74, cysteine 121–cysteine 321, and cysteine 200–cysteine 232. The active-site Proton acceptor is histidine 67. Ca(2+) is bound by residues aspartate 68, valine 71, glycine 73, aspartate 75, and serine 77. A substrate-binding site is contributed by proline 163. Position 193 (histidine 193) interacts with heme b. Threonine 194 is a Ca(2+) binding site. Residues aspartate 245, serine 248, and aspartate 253 each coordinate Ca(2+).

Belongs to the peroxidase family. Classical plant (class III) peroxidase subfamily. Heme b serves as cofactor. It depends on Ca(2+) as a cofactor. As to expression, slightly expressed in roots.

The protein localises to the secreted. It catalyses the reaction 2 a phenolic donor + H2O2 = 2 a phenolic radical donor + 2 H2O. In terms of biological role, removal of H(2)O(2), oxidation of toxic reductants, biosynthesis and degradation of lignin, suberization, auxin catabolism, response to environmental stresses such as wounding, pathogen attack and oxidative stress. These functions might be dependent on each isozyme/isoform in each plant tissue. The protein is Peroxidase 45 (PER45) of Arabidopsis thaliana (Mouse-ear cress).